The following is a 211-amino-acid chain: Adenylate kinase (211 aa).

Residue 13–18 (GAGKGT) coordinates ATP. Residues 33-62 (STGDILRVAVANKTKLGLEAKKFMDAGQLV) form an NMP region. AMP is bound by residues threonine 34, arginine 39, 60–62 (QLV), 88–91 (GFPR), and glutamine 95. The LID stretch occupies residues 129–161 (GRRTSKVTGKIYHIKFNPPVDEKPEDLVQRADD). ATP-binding positions include arginine 130 and 139 to 140 (IY). 2 residues coordinate AMP: arginine 158 and arginine 169. ATP is bound at residue lysine 197.

It belongs to the adenylate kinase family. As to quaternary structure, monomer.

The protein resides in the cytoplasm. The enzyme catalyses AMP + ATP = 2 ADP. Its pathway is purine metabolism; AMP biosynthesis via salvage pathway; AMP from ADP: step 1/1. Catalyzes the reversible transfer of the terminal phosphate group between ATP and AMP. Plays an important role in cellular energy homeostasis and in adenine nucleotide metabolism. The chain is Adenylate kinase from Fusobacterium nucleatum subsp. nucleatum (strain ATCC 25586 / DSM 15643 / BCRC 10681 / CIP 101130 / JCM 8532 / KCTC 2640 / LMG 13131 / VPI 4355).